We begin with the raw amino-acid sequence, 239 residues long: Heptaprenylglyceryl phosphate synthase (239 aa).

Lys-12 is a binding site for sn-glycerol 1-phosphate. Positions 14 and 40 each coordinate Mg(2+). Sn-glycerol 1-phosphate is bound by residues 159–164 (YLEYSG), Gly-189, and 209–210 (GN).

This sequence belongs to the GGGP/HepGP synthase family. Group I subfamily. In terms of assembly, homodimer. The cofactor is Mg(2+).

It carries out the reaction sn-glycerol 1-phosphate + all-trans-heptaprenyl diphosphate = 3-heptaprenyl-sn-glycero-1-phosphate + diphosphate. The protein operates within membrane lipid metabolism; glycerophospholipid metabolism. Its function is as follows. Prenyltransferase that catalyzes in vivo the transfer of the heptaprenyl moiety of heptaprenyl pyrophosphate (HepPP; 35 carbon atoms) to the C3 hydroxyl of sn-glycerol-1-phosphate (G1P), producing heptaprenylglyceryl phosphate (HepGP). This reaction is an ether-bond-formation step in the biosynthesis of archaea-type G1P-based membrane lipids found in Bacillales. To a much lesser extent, is also able to use geranylgeranyl diphosphate (GGPP; C20) as the prenyl donor. This is Heptaprenylglyceryl phosphate synthase from Geobacillus kaustophilus (strain HTA426).